The chain runs to 827 residues: Periplasmic nitrate reductase (827 aa).

The segment at residues 1–32 (MTLSRRAFIKQTAAATAASAAGVVLPGVDALA) is a signal peptide (tat-type signal). The region spanning 37-93 (LTWSKAPCRFCGTGCGVSVGVKNGKVVATQGDPQAEVNRGLNCVKGYFLSKIMYGQD) is the 4Fe-4S Mo/W bis-MGD-type domain. Positions 44, 47, 51, and 79 each coordinate [4Fe-4S] cluster. Mo-bis(molybdopterin guanine dinucleotide) is bound by residues lysine 81, glutamine 148, asparagine 173, cysteine 177, 241–245 (STFEH), 260–262 (QSD), methionine 371, glutamine 375, asparagine 481, 507–508 (SD), lysine 530, aspartate 557, and 717–726 (TGRVLEHWHS). Position 793 (tryptophan 793) interacts with substrate. Mo-bis(molybdopterin guanine dinucleotide)-binding residues include asparagine 801 and lysine 818.

This sequence belongs to the prokaryotic molybdopterin-containing oxidoreductase family. NasA/NapA/NarB subfamily. In terms of assembly, component of the periplasmic nitrate reductase NapAB complex composed of NapA and NapB. [4Fe-4S] cluster is required as a cofactor. The cofactor is Mo-bis(molybdopterin guanine dinucleotide). Predicted to be exported by the Tat system. The position of the signal peptide cleavage has not been experimentally proven.

It is found in the periplasm. It catalyses the reaction 2 Fe(II)-[cytochrome] + nitrate + 2 H(+) = 2 Fe(III)-[cytochrome] + nitrite + H2O. Functionally, catalytic subunit of the periplasmic nitrate reductase complex NapAB. Receives electrons from NapB and catalyzes the reduction of nitrate to nitrite. This chain is Periplasmic nitrate reductase, found in Paraburkholderia xenovorans (strain LB400).